Here is a 272-residue protein sequence, read N- to C-terminus: Phosphate import ATP-binding protein PstB (272 aa).

The 248-residue stretch at 20–267 folds into the ABC transporter domain; it reads VKKEVVYETN…PADQRTADYI (248 aa). 58-65 lines the ATP pocket; sequence GPSGCGKS.

This sequence belongs to the ABC transporter superfamily. Phosphate importer (TC 3.A.1.7) family. The complex is composed of two ATP-binding proteins (PstB), two transmembrane proteins (PstC and PstA) and a solute-binding protein (PstS).

Its subcellular location is the cell membrane. The catalysed reaction is phosphate(out) + ATP + H2O = ADP + 2 phosphate(in) + H(+). Functionally, part of the ABC transporter complex PstSACB involved in phosphate import. Responsible for energy coupling to the transport system. This chain is Phosphate import ATP-binding protein PstB, found in Geobacillus kaustophilus (strain HTA426).